Here is a 248-residue protein sequence, read N- to C-terminus: Probable transcriptional regulatory protein FTL_0929 (248 aa).

This sequence belongs to the TACO1 family.

The protein resides in the cytoplasm. The sequence is that of Probable transcriptional regulatory protein FTL_0929 from Francisella tularensis subsp. holarctica (strain LVS).